A 470-amino-acid polypeptide reads, in one-letter code: Glutamate--tRNA ligase (470 aa).

The 'HIGH' region motif lies at 9–19; it reads PSPTGFLHVGG. The 'KMSKS' region motif lies at 236–240; sequence RLSKR. An ATP-binding site is contributed by K239.

Belongs to the class-I aminoacyl-tRNA synthetase family. Glutamate--tRNA ligase type 1 subfamily. As to quaternary structure, monomer.

The protein localises to the cytoplasm. The catalysed reaction is tRNA(Glu) + L-glutamate + ATP = L-glutamyl-tRNA(Glu) + AMP + diphosphate. Its function is as follows. Catalyzes the attachment of glutamate to tRNA(Glu) in a two-step reaction: glutamate is first activated by ATP to form Glu-AMP and then transferred to the acceptor end of tRNA(Glu). In Legionella pneumophila subsp. pneumophila (strain Philadelphia 1 / ATCC 33152 / DSM 7513), this protein is Glutamate--tRNA ligase.